Reading from the N-terminus, the 283-residue chain is Phosphate import ATP-binding protein PstB 1 (283 aa).

The span at 1 to 16 shows a compositional bias: acidic residues; sequence MSSDDTTDPTADDESF. Positions 1-35 are disordered; the sequence is MSSDDTTDPTADDESFTDSPVAGLEQSTTTRGSGR. The region spanning 38-278 is the ABC transporter domain; that stretch reads ISARNINVWY…PSSERVENYI (241 aa). Residue 70–77 coordinates ATP; it reads GPSGCGKS.

This sequence belongs to the ABC transporter superfamily. Phosphate importer (TC 3.A.1.7) family. In terms of assembly, the complex is composed of two ATP-binding proteins (PstB), two transmembrane proteins (PstC and PstA) and a solute-binding protein (PstS).

The protein localises to the cell membrane. The catalysed reaction is phosphate(out) + ATP + H2O = ADP + 2 phosphate(in) + H(+). Part of the ABC transporter complex PstSACB involved in phosphate import. Responsible for energy coupling to the transport system. In Natronomonas pharaonis (strain ATCC 35678 / DSM 2160 / CIP 103997 / JCM 8858 / NBRC 14720 / NCIMB 2260 / Gabara) (Halobacterium pharaonis), this protein is Phosphate import ATP-binding protein PstB 1.